Here is a 178-residue protein sequence, read N- to C-terminus: MNAPKEGDYIAIQSYKHDGSLHRTWRDTMVLKTSENAVIGCNDHTLVTESDGRKWVTREPALIYFHKKYWFNVVAMIREGGVSYYCNLASPHVMDQEALKYIDYDLDVKVFPNGEKRLLDVDEYEAHSAKWHYSAETDRILKANVKVLVDWINNGKGPFSKEYIDIWYNRYQELAHHR.

The active-site Proton donor is the arginine 23. Mg(2+) contacts are provided by asparagine 87, aspartate 103, aspartate 105, aspartate 107, aspartate 120, and glutamate 123.

Belongs to the Ntdp family. Mg(2+) is required as a cofactor.

The catalysed reaction is a ribonucleoside 5'-triphosphate + H2O = a ribonucleoside 5'-diphosphate + phosphate + H(+). The enzyme catalyses a ribonucleoside 5'-diphosphate + H2O = a ribonucleoside 5'-phosphate + phosphate + H(+). Its function is as follows. Has nucleoside phosphatase activity towards nucleoside triphosphates and nucleoside diphosphates. In Latilactobacillus sakei subsp. sakei (strain 23K) (Lactobacillus sakei subsp. sakei), this protein is Nucleoside triphosphate/diphosphate phosphatase.